The chain runs to 210 residues: MPQWNLATFVKLLEYAKKNGIVKRYNTYYIKGVALVQCNQVSINVTVAKDHLHMFYDPVMNMYFAYSMPFFYQYPNAQQLFTEGKKLCEELEKLTPSATLTPPKNADLDLDRILAKLSITNDKVLTKGEEYKKAKEYTRTHYPECYAIVKEMGTNKDTVKLIEAIFAREWETAERTLTLIAMDCVEPECISRLGKFIDLCRETISRREVR.

This is an uncharacterized protein from Sulfolobus islandicus filamentous virus (isolate Iceland/Hveragerdi) (SIFV).